We begin with the raw amino-acid sequence, 417 residues long: Serine hydroxymethyltransferase (417 aa).

(6S)-5,6,7,8-tetrahydrofolate-binding positions include Leu121 and 125–127 (GHL). Lys229 is subject to N6-(pyridoxal phosphate)lysine. (6S)-5,6,7,8-tetrahydrofolate is bound at residue 355–357 (SPF).

The protein belongs to the SHMT family. Homodimer. The cofactor is pyridoxal 5'-phosphate.

It localises to the cytoplasm. It catalyses the reaction (6R)-5,10-methylene-5,6,7,8-tetrahydrofolate + glycine + H2O = (6S)-5,6,7,8-tetrahydrofolate + L-serine. Its pathway is one-carbon metabolism; tetrahydrofolate interconversion. It functions in the pathway amino-acid biosynthesis; glycine biosynthesis; glycine from L-serine: step 1/1. Its function is as follows. Catalyzes the reversible interconversion of serine and glycine with tetrahydrofolate (THF) serving as the one-carbon carrier. This reaction serves as the major source of one-carbon groups required for the biosynthesis of purines, thymidylate, methionine, and other important biomolecules. Also exhibits THF-independent aldolase activity toward beta-hydroxyamino acids, producing glycine and aldehydes, via a retro-aldol mechanism. The polypeptide is Serine hydroxymethyltransferase (Shewanella sp. (strain MR-4)).